The chain runs to 70 residues: Venom antimicrobial peptide-6 (70 aa).

An N-terminal signal peptide occupies residues 1 to 23 (MKSQTFFLLFLVVFLLAITQSEA). A Phenylalanine amide modification is found at phenylalanine 36. A propeptide spanning residues 40–70 (SLRDMDTMKYLYDPSLSAADLKTLQKLMENY) is cleaved from the precursor.

The protein belongs to the non-disulfide-bridged peptide (NDBP) superfamily. Short antimicrobial peptide (group 4) family. In terms of tissue distribution, expressed by the venom gland.

The protein resides in the secreted. Its subcellular location is the target cell membrane. Its function is as follows. Amphipathic peptide that exhibits extensive cytolytic activities against both prokaryotic and eukaryotic cells. Is more potent against Gram-positive bacteria (lethal concentration (LC)=0.25-2.9 uM) than against Gram-negative bacteria (LC=6.2-&gt;50 uM), and fungi ((LC)=14.1-&gt;50 uM). Shows hemolytic activity against rabbit erythrocytes (37.7% of inhibition at 6.25 uM) and cytolysis against rat dorsal root ganglions. In vivo, intravenous injection into mice tail provokes uncomfortable symptoms with a death rate of 12.5%. This chain is Venom antimicrobial peptide-6, found in Mesobuthus eupeus (Lesser Asian scorpion).